The sequence spans 487 residues: Probable glutamate receptor (487 aa).

An N-terminal signal peptide occupies residues methionine 1–glutamine 23. The Extracellular segment spans residues threonine 24–lysine 169. N-linked (GlcNAc...) asparagine glycosylation occurs at asparagine 104. The chain crosses the membrane as a helical span at residues glutamate 170–alanine 190. Residues arginine 191–arginine 235 are Cytoplasmic-facing. The chain crosses the membrane as a helical span at residues valine 236–phenylalanine 256. At threonine 257–alanine 419 the chain is on the extracellular side. A helical transmembrane segment spans residues leucine 420–valine 440. Over glutamate 441–alanine 487 the chain is Cytoplasmic.

It belongs to the glutamate-gated ion channel (TC 1.A.10.1) family.

It is found in the cell membrane. The protein resides in the postsynaptic cell membrane. Its function is as follows. Receptor for glutamate. L-glutamate acts as an excitatory neurotransmitter at many synapses in the central nervous system. The postsynaptic actions of Glu are mediated by a variety of receptors that are named according to their selective agonists. This chain is Probable glutamate receptor (KBP), found in Gallus gallus (Chicken).